The chain runs to 113 residues: Cell division protein FtsB (113 aa).

At 1-3 (MRL) the chain is on the cytoplasmic side. Residues 4 to 21 (ISLLLFVLLLAIQYPLWL) form a helical membrane-spanning segment. Topologically, residues 22-113 (GKGGWLRVWD…PNSVAGRGGH (92 aa)) are periplasmic. Positions 34–64 (RQVNEQTVHNQALKLRNAKLEGEVKDLQDGT) form a coiled coil. A disordered region spans residues 93–113 (KVSATPPLPPPPNSVAGRGGH).

Belongs to the FtsB family. Part of a complex composed of FtsB, FtsL and FtsQ.

The protein localises to the cell inner membrane. Essential cell division protein. May link together the upstream cell division proteins, which are predominantly cytoplasmic, with the downstream cell division proteins, which are predominantly periplasmic. This is Cell division protein FtsB from Cupriavidus metallidurans (strain ATCC 43123 / DSM 2839 / NBRC 102507 / CH34) (Ralstonia metallidurans).